Consider the following 545-residue polypeptide: Gamma-curcumene synthase (545 aa).

Mg(2+) contacts are provided by Asp299, Asp303, Asn442, and Glu450. The DDXXD motif motif lies at 299–303 (DDTYD).

The protein belongs to the terpene synthase family. The cofactor is Mg(2+).

The protein resides in the cytoplasm. It is found in the cytosol. It carries out the reaction (2E,6E)-farnesyl diphosphate = gamma-curcumene + diphosphate. The protein operates within secondary metabolite biosynthesis; terpenoid biosynthesis. Its function is as follows. Sesquiterpene synthase involved in gamma-curcumene biosynthesis. The chain is Gamma-curcumene synthase from Pogostemon cablin (Patchouli).